Reading from the N-terminus, the 2175-residue chain is Homeobox protein cut (2175 aa).

Disordered stretches follow at residues 139–170 and 249–432; these read NLLA…QQSG and GNVK…GQPA. Low complexity-rich tracts occupy residues 153-169 and 249-268; these read LLSA…LQQS and GNVK…SNNS. Positions 265–343 form a coiled coil; that stretch reads SNNSHQDEEE…ENKDAGEASL (79 aa). Acidic residues predominate over residues 271-294; sequence DEEELDDEEEDEEEDEDEDDEEEN. A compositionally biased stretch (polar residues) spans 309–320; sequence QQETRTEPSATT. The segment covering 344–359 has biased composition (low complexity); sequence NVSNNHNTTDSNNSCS. The span at 360 to 374 shows a compositional bias: polar residues; it reads RKNNNGGNESEQHVA. Over residues 384 to 415 the composition is skewed to low complexity; that stretch reads NNNTNTSNNNNTSNTATSNTNNNNNNNSSSGN. A coiled-coil region spans residues 433–499; it reads VLLAAKDKEI…NEALAEATAL (67 aa). Over residues 503 to 515 the composition is skewed to low complexity; it reads ASTNNNNNSQSSD. 2 disordered regions span residues 503-600 and 656-765; these read ASTN…KIKK and ASDA…NTNA. Over residues 546-568 the composition is skewed to acidic residues; sequence AEDDEEDEDQAMLVDSEEAEDKP. The segment covering 673 to 696 has biased composition (basic residues); the sequence is QQQHQHQQQHHQQQHLHQQHHHHL. A compositionally biased stretch (low complexity) spans 697-710; the sequence is QQQPNSGSNSNPAS. Basic residues predominate over residues 714-735; sequence HHGHHLHGHGLLHPSSAHHLHH. Low complexity predominate over residues 738–765; that stretch reads TESNSNSSTPTAAGNNNGSNNSSSNTNA. The segment at residues 877 to 964 is a DNA-binding region (CUT 1); sequence NMDKYANQAL…VMLLKSLIPK (88 aa). Disordered stretches follow at residues 1001-1083 and 1197-1289; these read LMKQ…HDDQ and QRSS…EFAA. Basic and acidic residues-rich tracts occupy residues 1009–1030 and 1062–1083; these read QHRE…EDSK and QRER…HDDQ. A coiled-coil region spans residues 1056-1161; it reads EQAAAQQRER…QQQAAQAQAQ (106 aa). Low complexity predominate over residues 1249 to 1282; that stretch reads GAPPTAAPPTGGASSNSAAPSPLSNSILPPALSS. The segment at residues 1330 to 1417 is a DNA-binding region (CUT 2); sequence QQQFDMFNNL…VHKLVASQYK (88 aa). Residues 1463–1522 adopt a coiled-coil conformation; the sequence is AQAQHLMQQMQAAAMSAAMQQQQVAQAQQQAQQAQQAQQHLQQQAQQHLQQQQHLAQQQH. Residues 1507–1540 are compositionally biased toward low complexity; sequence AQQHLQQQQHLAQQQHPHQQHHQAAAAAAALHHQ. Disordered regions lie at residues 1507–1588, 1695–1747, 1803–1826, 1922–1955, 2069–2097, and 2113–2175; these read AQQH…PMLM, ERRE…PSKK, QVPH…ATPF, RSDD…DKTT, KQEE…QKLK, and SSTG…GWNY. Residues 1564–1573 are compositionally biased toward gly residues; sequence AQPGGPGGNQ. Residues 1608–1695 constitute a DNA-binding region (CUT 3); that stretch reads YEMAALTQDL…VERLQLLKNE (88 aa). Positions 1709–1732 are enriched in low complexity; the sequence is NQQDNSSDTSSNDTNDFYTSSPGP. Positions 1745 to 1804 form a DNA-binding region, homeobox; that stretch reads SKKQRVLFSEEQKEALRLAFALDPYPNVGTIEFLANELGLATRTITNWFHNHRMRLKQQV. 2 positions are modified to phosphoserine: S1940 and S1944. Residues 2126 to 2135 are compositionally biased toward pro residues; sequence PLAPPPPPPA. Low complexity predominate over residues 2136–2175; it reads ASSSIVSGESTTSSSSSSNTSSSTPAVTTAAATAAAGWNY.

This sequence belongs to the CUT homeobox family. As to expression, detected in many cells in the central nervous system, all external sensory organs, some peripheral neurons, and in the non-neural cells of the spiracles and the Malpighian tubules.

It localises to the nucleus. Functionally, regulator of cell fate decisions in multiple lineages. Specifically, functions as a determination factor that specifies sensory organ identity in precursor cells. Probably also involved in cell type specification of Malpighian tubules. In absence of cut gene external sensory organs are transformed into chordotonal organs. The sequence is that of Homeobox protein cut (ct) from Drosophila melanogaster (Fruit fly).